The following is a 1250-amino-acid chain: Bifunctional autolysin (1250 aa).

The N-terminal stretch at 1–29 (MAKKFNYKLPSMVALTLVGSAVTAHQVQA) is a signal peptide. Residues 103 to 138 (GDTRANQSATTNNTQPVAKSTSTTAPKTNTNVTNAG) are compositionally biased toward polar residues. Disordered stretches follow at residues 103–151 (GDTR…NSEN) and 173–219 (AAAP…KYKP). Residues 173 to 196 (AAAPKAATTSAPKAKTEATPKVTT) show a composition bias toward low complexity. The interval 199-769 (ASAQPRSVAA…AVAQPKTAVK (571 aa)) is N-acetylmuramoyl-L-alanine amidase. 7 GW domains span residues 437–511 (TVAA…YNTA), 513–587 (SPVN…DTAK), 606–680 (TVSS…YNNA), 682–756 (SPVN…VPAA), 778–853 (TTQT…VQNL), 855–930 (KEVK…APTA), and 937–1011 (AAKD…KELI). Residues 770-1250 (AYTVTKPQTT…GKYFDIPQYK (481 aa)) are endo-beta-N-acetylglucosaminidase.

It in the N-terminal section; belongs to the N-acetylmuramoyl-L-alanine amidase 2 family. This sequence in the C-terminal section; belongs to the glycosyl hydrolase 73 family. As to quaternary structure, oligomer; forms a ring structure at the cell surface which is important for efficient partitioning of daughter cells after cell division. Undergoes proteolytic processing to generate the two extracellular lytic enzymes, probably at the septal region on the cell surface.

The protein resides in the secreted. The enzyme catalyses Hydrolyzes the link between N-acetylmuramoyl residues and L-amino acid residues in certain cell-wall glycopeptides.. It carries out the reaction an N(4)-(oligosaccharide-(1-&gt;3)-[oligosaccharide-(1-&gt;6)]-beta-D-Man-(1-&gt;4)-beta-D-GlcNAc-(1-&gt;4)-alpha-D-GlcNAc)-L-asparaginyl-[protein] + H2O = an oligosaccharide-(1-&gt;3)-[oligosaccharide-(1-&gt;6)]-beta-D-Man-(1-&gt;4)-D-GlcNAc + N(4)-(N-acetyl-beta-D-glucosaminyl)-L-asparaginyl-[protein]. In terms of biological role, endohydrolysis of the di-N-acetylchitobiosyl unit in high-mannose glycopeptides and glycoproteins containing the -[(Man)5(GlcNAc)2]-Asn structure. One N-acetyl-D-glucosamine residue remains attached to the protein; the rest of the oligosaccharide is released intact. Cleaves the peptidoglycan connecting the daughter cells at the end of the cell division cycle, resulting in the separation of the two newly divided cells. Acts as an autolysin in penicillin-induced lysis. The protein is Bifunctional autolysin (atl) of Staphylococcus aureus (strain MSSA476).